The sequence spans 352 residues: Histidine biosynthesis bifunctional protein HisB (352 aa).

A histidinol-phosphatase region spans residues 1–164; that stretch reads MSQKILFIDR…EIENEILSSF (164 aa). D9 (nucleophile) is an active-site residue. Mg(2+) contacts are provided by D9 and D11. The active-site Proton donor is D11. Zn(2+)-binding residues include C93, H95, C101, and C103. A Mg(2+)-binding site is contributed by D130. Positions 165–352 are imidazoleglycerol-phosphate dehydratase; sequence RSASYQRTTK…ENLASSKGVI (188 aa).

It in the N-terminal section; belongs to the histidinol-phosphatase family. In the C-terminal section; belongs to the imidazoleglycerol-phosphate dehydratase family. Mg(2+) is required as a cofactor. Zn(2+) serves as cofactor.

It localises to the cytoplasm. The catalysed reaction is D-erythro-1-(imidazol-4-yl)glycerol 3-phosphate = 3-(imidazol-4-yl)-2-oxopropyl phosphate + H2O. It carries out the reaction L-histidinol phosphate + H2O = L-histidinol + phosphate. The protein operates within amino-acid biosynthesis; L-histidine biosynthesis; L-histidine from 5-phospho-alpha-D-ribose 1-diphosphate: step 6/9. It participates in amino-acid biosynthesis; L-histidine biosynthesis; L-histidine from 5-phospho-alpha-D-ribose 1-diphosphate: step 8/9. This chain is Histidine biosynthesis bifunctional protein HisB, found in Campylobacter jejuni subsp. jejuni serotype O:2 (strain ATCC 700819 / NCTC 11168).